Reading from the N-terminus, the 362-residue chain is F-box protein At1g54550 (362 aa).

Residues 1–47 enclose the F-box domain; it reads MATVTDLPDDLVREIFSRVPLTSLRAVRSTCKKWNAISKYDILGKKA.

This is F-box protein At1g54550 from Arabidopsis thaliana (Mouse-ear cress).